Reading from the N-terminus, the 432-residue chain is Phosphomethylpyrimidine synthase (432 aa).

Residues asparagine 66, methionine 95, tyrosine 124, histidine 163, 185 to 187 (SRG), 226 to 229 (DGMR), and glutamate 265 each bind substrate. Residue histidine 269 coordinates Zn(2+). Tyrosine 292 contributes to the substrate binding site. Histidine 333 provides a ligand contact to Zn(2+). [4Fe-4S] cluster contacts are provided by cysteine 409, cysteine 412, and cysteine 416.

The protein belongs to the ThiC family. [4Fe-4S] cluster serves as cofactor.

The catalysed reaction is 5-amino-1-(5-phospho-beta-D-ribosyl)imidazole + S-adenosyl-L-methionine = 4-amino-2-methyl-5-(phosphooxymethyl)pyrimidine + CO + 5'-deoxyadenosine + formate + L-methionine + 3 H(+). The protein operates within cofactor biosynthesis; thiamine diphosphate biosynthesis. In terms of biological role, catalyzes the synthesis of the hydroxymethylpyrimidine phosphate (HMP-P) moiety of thiamine from aminoimidazole ribotide (AIR) in a radical S-adenosyl-L-methionine (SAM)-dependent reaction. The chain is Phosphomethylpyrimidine synthase from Desulforudis audaxviator (strain MP104C).